Reading from the N-terminus, the 456-residue chain is Bifunctional protein GlmU (456 aa).

A pyrophosphorylase region spans residues methionine 1–arginine 229. UDP-N-acetyl-alpha-D-glucosamine is bound by residues leucine 11–glycine 14, lysine 25, glutamine 76, glycine 81–threonine 82, tyrosine 103–aspartate 105, glycine 140, glutamate 154, asparagine 169, and asparagine 227. Aspartate 105 lines the Mg(2+) pocket. Asparagine 227 serves as a coordination point for Mg(2+). Residues leucine 230–alanine 250 form a linker region. An N-acetyltransferase region spans residues glycine 251 to lysine 456. Residues arginine 333 and lysine 351 each coordinate UDP-N-acetyl-alpha-D-glucosamine. Histidine 363 acts as the Proton acceptor in catalysis. UDP-N-acetyl-alpha-D-glucosamine-binding residues include tyrosine 366 and asparagine 377. Residues alanine 380, asparagine 386–tyrosine 387, serine 405, alanine 423, and arginine 440 contribute to the acetyl-CoA site.

The protein in the N-terminal section; belongs to the N-acetylglucosamine-1-phosphate uridyltransferase family. In the C-terminal section; belongs to the transferase hexapeptide repeat family. Homotrimer. The cofactor is Mg(2+).

The protein resides in the cytoplasm. The enzyme catalyses alpha-D-glucosamine 1-phosphate + acetyl-CoA = N-acetyl-alpha-D-glucosamine 1-phosphate + CoA + H(+). It catalyses the reaction N-acetyl-alpha-D-glucosamine 1-phosphate + UTP + H(+) = UDP-N-acetyl-alpha-D-glucosamine + diphosphate. The protein operates within nucleotide-sugar biosynthesis; UDP-N-acetyl-alpha-D-glucosamine biosynthesis; N-acetyl-alpha-D-glucosamine 1-phosphate from alpha-D-glucosamine 6-phosphate (route II): step 2/2. Its pathway is nucleotide-sugar biosynthesis; UDP-N-acetyl-alpha-D-glucosamine biosynthesis; UDP-N-acetyl-alpha-D-glucosamine from N-acetyl-alpha-D-glucosamine 1-phosphate: step 1/1. It participates in bacterial outer membrane biogenesis; LPS lipid A biosynthesis. In terms of biological role, catalyzes the last two sequential reactions in the de novo biosynthetic pathway for UDP-N-acetylglucosamine (UDP-GlcNAc). The C-terminal domain catalyzes the transfer of acetyl group from acetyl coenzyme A to glucosamine-1-phosphate (GlcN-1-P) to produce N-acetylglucosamine-1-phosphate (GlcNAc-1-P), which is converted into UDP-GlcNAc by the transfer of uridine 5-monophosphate (from uridine 5-triphosphate), a reaction catalyzed by the N-terminal domain. In Shigella flexneri serotype 5b (strain 8401), this protein is Bifunctional protein GlmU.